The chain runs to 330 residues: GTPase Obg (330 aa).

In terms of domain architecture, Obg spans 1–159 (MHFIDEVKIY…MWIHLSLKLL (159 aa)). The OBG-type G domain occupies 160–327 (SDVGLVGFPN…IVKLALETIK (168 aa)). GTP contacts are provided by residues 166 to 173 (GFPNAGKS), 191 to 195 (FTTLV), 212 to 215 (DIPG), 279 to 282 (NKCD), and 308 to 310 (STY). Mg(2+) contacts are provided by serine 173 and threonine 193.

It belongs to the TRAFAC class OBG-HflX-like GTPase superfamily. OBG GTPase family. As to quaternary structure, monomer. It depends on Mg(2+) as a cofactor.

It localises to the cytoplasm. In terms of biological role, an essential GTPase which binds GTP, GDP and possibly (p)ppGpp with moderate affinity, with high nucleotide exchange rates and a fairly low GTP hydrolysis rate. Plays a role in control of the cell cycle, stress response, ribosome biogenesis and in those bacteria that undergo differentiation, in morphogenesis control. This Rickettsia massiliae (strain Mtu5) protein is GTPase Obg.